The sequence spans 700 residues: UvrABC system protein B (700 aa).

Residues 26–183 form the Helicase ATP-binding domain; that stretch reads SGLHRGDRIQ…RALVGIQYLR (158 aa). 39 to 46 contributes to the ATP binding site; it reads GVTGSGKT. The Beta-hairpin signature appears at 92–115; the sequence is YYDYYQPEAYVPSSDTYIEKDASI. The Helicase C-terminal domain occupies 430-596; that stretch reads QVDDLLHEIR…GVTKSVDEVR (167 aa). Residues 608 to 627 form a disordered region; the sequence is REGEAPAPRRLASESAPRSR. The UVR domain occupies 631-666; sequence ETLVGELEIAMREAAVALDFEAAARLRDQLFEVRTA. A disordered region spans residues 667-700; sequence LGQAPSEARGNAQAPKRPPGSAPQRRAGGGRRGR.

This sequence belongs to the UvrB family. Forms a heterotetramer with UvrA during the search for lesions. Interacts with UvrC in an incision complex.

It is found in the cytoplasm. Functionally, the UvrABC repair system catalyzes the recognition and processing of DNA lesions. A damage recognition complex composed of 2 UvrA and 2 UvrB subunits scans DNA for abnormalities. Upon binding of the UvrA(2)B(2) complex to a putative damaged site, the DNA wraps around one UvrB monomer. DNA wrap is dependent on ATP binding by UvrB and probably causes local melting of the DNA helix, facilitating insertion of UvrB beta-hairpin between the DNA strands. Then UvrB probes one DNA strand for the presence of a lesion. If a lesion is found the UvrA subunits dissociate and the UvrB-DNA preincision complex is formed. This complex is subsequently bound by UvrC and the second UvrB is released. If no lesion is found, the DNA wraps around the other UvrB subunit that will check the other stand for damage. This chain is UvrABC system protein B, found in Gemmatimonas aurantiaca (strain DSM 14586 / JCM 11422 / NBRC 100505 / T-27).